Reading from the N-terminus, the 69-residue chain is Copper chaperone CopZ (69 aa).

Residues 1 to 67 (MKQEFSVKGM…AINELGYQAE (67 aa)) form the HMA domain. Cu cation-binding residues include Cys12 and Cys15.

As to quaternary structure, monomer in the absence of copper. Homodimer or homooligomer in the presence of copper ions. Interacts with the copper ATPase CopA. Interacts with CopY via a charge-based interaction.

Its subcellular location is the cytoplasm. In terms of biological role, acts as a copper chaperone by delivering 2 Cu(+) ions to CopY Zn(2+)-bound form. This transfer results in displacement of zinc and dissociation of CopY from the promoter, allowing transcription of the copYZAB operon. The chain is Copper chaperone CopZ (copZ) from Enterococcus hirae (strain ATCC 9790 / DSM 20160 / JCM 8729 / LMG 6399 / NBRC 3181 / NCIMB 6459 / NCDO 1258 / NCTC 12367 / WDCM 00089 / R).